The chain runs to 158 residues: Mitotic-spindle organizing protein 2A (158 aa).

Serine 34 bears the Phosphoserine mark. A disordered region spans residues 84–158 (RLASEPQDPA…PGKSPTQGST (75 aa)). Over residues 112–122 (SAALGGVLALA) the composition is skewed to low complexity. Polar residues predominate over residues 128-140 (EGSSQRMPRQPSA). Serine 152 is modified (phosphoserine).

This sequence belongs to the MOZART2 family. As to quaternary structure, associates with the gamma-tubulin ring complex (gTuRC) consisting of TUBGCP2, TUBGCP3, TUBGCP4, TUBGCP5 and TUBGCP6 and gamma-tubulin TUBG1 or TUBG2; within the complex, interacts with TUBGCP2; the interaction plays a role in gTuRC activation.

It localises to the cytoplasm. The protein resides in the cytoskeleton. The protein localises to the microtubule organizing center. It is found in the centrosome. Its subcellular location is the spindle. Functionally, required for the recruitment and the assembly of the gamma-tubulin ring complex (gTuRC) at the centrosome. The gTuRC regulates the minus-end nucleation of alpha-beta tubulin heterodimers that grow into microtubule protafilaments, a critical step in centrosome duplication and spindle formation. The polypeptide is Mitotic-spindle organizing protein 2A (MZT2A) (Homo sapiens (Human)).